Consider the following 127-residue polypeptide: Anti-adapter protein IraD (127 aa).

It belongs to the GpW/Gp25 family. IraD subfamily. Interacts with RssB.

It localises to the cytoplasm. Inhibits RpoS proteolysis by regulating RssB activity, thereby increasing the stability of the sigma stress factor RpoS during oxidative stress. Its effect on RpoS stability is due to its interaction with RssB, which probably blocks the interaction of RssB with RpoS, and the consequent delivery of the RssB-RpoS complex to the ClpXP protein degradation pathway. This chain is Anti-adapter protein IraD, found in Escherichia coli O6:K15:H31 (strain 536 / UPEC).